A 131-amino-acid polypeptide reads, in one-letter code: Large ribosomal subunit protein bL12 (131 aa).

It belongs to the bacterial ribosomal protein bL12 family. Homodimer. Part of the ribosomal stalk of the 50S ribosomal subunit. Forms a multimeric L10(L12)X complex, where L10 forms an elongated spine to which 2 to 4 L12 dimers bind in a sequential fashion. Binds GTP-bound translation factors.

Its function is as follows. Forms part of the ribosomal stalk which helps the ribosome interact with GTP-bound translation factors. Is thus essential for accurate translation. The chain is Large ribosomal subunit protein bL12 from Prochlorococcus marinus (strain NATL2A).